A 939-amino-acid chain; its full sequence is Phosphoenolpyruvate carboxylase (939 aa).

Catalysis depends on residues histidine 151 and lysine 593.

Belongs to the PEPCase type 1 family. Requires Mg(2+) as cofactor.

It catalyses the reaction oxaloacetate + phosphate = phosphoenolpyruvate + hydrogencarbonate. Functionally, forms oxaloacetate, a four-carbon dicarboxylic acid source for the tricarboxylic acid cycle. This Gloeobacter violaceus (strain ATCC 29082 / PCC 7421) protein is Phosphoenolpyruvate carboxylase.